The chain runs to 442 residues: Glutamyl-tRNA(Gln) amidotransferase subunit A (442 aa).

Active-site charge relay system residues include lysine 50 and serine 125. Serine 149 serves as the catalytic Acyl-ester intermediate.

It belongs to the amidase family. GatA subfamily. As to quaternary structure, heterotrimer of A, B and C subunits.

The catalysed reaction is L-glutamyl-tRNA(Gln) + L-glutamine + ATP + H2O = L-glutaminyl-tRNA(Gln) + L-glutamate + ADP + phosphate + H(+). Its function is as follows. Allows the formation of correctly charged Gln-tRNA(Gln) through the transamidation of misacylated Glu-tRNA(Gln) in organisms which lack glutaminyl-tRNA synthetase. The reaction takes place in the presence of glutamine and ATP through an activated gamma-phospho-Glu-tRNA(Gln). This is Glutamyl-tRNA(Gln) amidotransferase subunit A from Nitratiruptor sp. (strain SB155-2).